The primary structure comprises 94 residues: Enhancer of yellow 2 transcription factor (94 aa).

This sequence belongs to the ENY2 family. As to quaternary structure, component of the nuclear pore complex (NPC)-associated AMEX complex (anchoring and mRNA export complex), composed of at least e(y)2 and xmas-2. Component of the SAGA transcription coactivator-HAT complexes, at least composed of Ada2b, e(y)2, Pcaf/Gcn5, Taf10 and Nipped-A/Trrap. Within the SAGA complex, e(y)2, Sgf11, and not/nonstop form an additional subcomplex of SAGA called the DUB module (deubiquitination module). Component of the THO complex, composed of at least e(y)2, HPR1, THO2, THOC5, THOC6 and THOC7. Interacts with e(y)1. Interacts with su(Hw) (via zinc fingers). Interacts with xmas-2; required for localization to the nuclear periphery. Interacts with the nuclear pore complex (NPC).

The protein resides in the nucleus. The protein localises to the nucleoplasm. It is found in the cytoplasm. Functionally, involved in mRNA export coupled transcription activation by association with both the AMEX and the SAGA complexes. The SAGA complex is a multiprotein complex that activates transcription by remodeling chromatin and mediating histone acetylation and deubiquitination. Within the SAGA complex, participates in a subcomplex that specifically deubiquitinates histone H2B. The SAGA complex is recruited to specific gene promoters by activators, where it is required for transcription. Required for nuclear receptor-mediated transactivation. Involved in transcription elongation by recruiting the THO complex onto nascent mRNA. The AMEX complex functions in docking export-competent ribonucleoprotein particles (mRNPs) to the nuclear entrance of the nuclear pore complex (nuclear basket). AMEX participates in mRNA export and accurate chromatin positioning in the nucleus by tethering genes to the nuclear periphery. This is Enhancer of yellow 2 transcription factor from Drosophila mojavensis (Fruit fly).